The chain runs to 405 residues: Venom serine protease 34 (405 aa).

A signal peptide spans 1–35 (MIFTNNIAAFQNVVLVKKVKIVLLIFYGSIMFSMT). 2 cysteine pairs are disulfide-bonded: Cys-42–Cys-70 and Cys-95–Cys-111. Residues 42-147 (CDYYQNLNLG…EVRPIKRVKD (106 aa)) form the CUB domain. Asn-113 is a glycosylation site (N-linked (GlcNAc...) asparagine). The 237-residue stretch at 161–397 (IVGGTNTGIN…YIDWIVSQTP (237 aa)) folds into the Peptidase S1 domain. Cys-188 and Cys-204 are oxidised to a cystine. His-203 functions as the Charge relay system in the catalytic mechanism. Asn-209 and Asn-229 each carry an N-linked (GlcNAc...) asparagine glycan. The active-site Charge relay system is the Asp-257. Disulfide bonds link Cys-323–Cys-336 and Cys-345–Cys-375. The active-site Charge relay system is the Ser-349.

Belongs to the peptidase S1 family. Expressed by the venom duct.

The protein localises to the secreted. This Apis mellifera (Honeybee) protein is Venom serine protease 34.